The sequence spans 364 residues: Sulfate/thiosulfate import ATP-binding protein CysA (364 aa).

The 235-residue stretch at Ile3–Met237 folds into the ABC transporter domain. Residue Gly35–Thr42 coordinates ATP.

The protein belongs to the ABC transporter superfamily. Sulfate/tungstate importer (TC 3.A.1.6) family. As to quaternary structure, the complex is composed of two ATP-binding proteins (CysA), two transmembrane proteins (CysT and CysW) and a solute-binding protein (CysP).

Its subcellular location is the cell inner membrane. The enzyme catalyses sulfate(out) + ATP + H2O = sulfate(in) + ADP + phosphate + H(+). The catalysed reaction is thiosulfate(out) + ATP + H2O = thiosulfate(in) + ADP + phosphate + H(+). Its function is as follows. Part of the ABC transporter complex CysAWTP involved in sulfate/thiosulfate import. Responsible for energy coupling to the transport system. The sequence is that of Sulfate/thiosulfate import ATP-binding protein CysA from Salmonella typhi.